Consider the following 434-residue polypeptide: Chaperone SurA (434 aa).

The first 20 residues, 1-20 (MKNWRTLILGLVICANTAFA), serve as a signal peptide directing secretion. 2 PpiC domains span residues 171-272 (DTEL…KVND) and 282-382 (VTEV…QLVD).

It is found in the periplasm. The enzyme catalyses [protein]-peptidylproline (omega=180) = [protein]-peptidylproline (omega=0). Its function is as follows. Chaperone involved in the correct folding and assembly of outer membrane proteins. Recognizes specific patterns of aromatic residues and the orientation of their side chains, which are found more frequently in integral outer membrane proteins. May act in both early periplasmic and late outer membrane-associated steps of protein maturation. The chain is Chaperone SurA from Yersinia pestis bv. Antiqua (strain Nepal516).